A 136-amino-acid polypeptide reads, in one-letter code: Purkinje cell protein 2 homolog (136 aa).

Disordered regions lie at residues 1 to 64 and 86 to 136; these read MMDQ…PEMD and SSLP…TQAP. Residues 23-45 enclose the GoLoco 1 domain; the sequence is QEGFFNLLSHVQGDRMEGQRCSL. A compositionally biased stretch (polar residues) spans 49–59; that stretch reads PGQTTKSQSDP. Positions 63-85 constitute a GoLoco 2 domain; that stretch reads MDSLMDMLASTQGRRMDDQRVTV. Positions 107–117 are enriched in polar residues; it reads LSPQPLLTPQD. Position 127 is a phosphoserine (S127).

In terms of biological role, may function as a cell-type specific modulator for G protein-mediated cell signaling. The protein is Purkinje cell protein 2 homolog (PCP2) of Homo sapiens (Human).